The following is a 1006-amino-acid chain: uncharacterized protein (1006 aa).

A disordered region spans residues 326 to 371 (EMEKKRPRSPELVPKKIVMEKERPSSPDSEAEEREHNLRIEKERHQ). Basic and acidic residues-rich tracts occupy residues 338–350 (VPKKIVMEKERPS) and 358–371 (EREHNLRIEKERHQ). Coiled coils occupy residues 358–473 (EREH…ARLA) and 756–782 (EVQKQRAVDSLNSQYEKERNELDAFGR).

This is an uncharacterized protein from Caenorhabditis elegans.